Here is a 632-residue protein sequence, read N- to C-terminus: MKTYESNEYDVIVVGAGHAGVEAALASARMGEKTLLLTINLDMVAFMPCNPSVGGPAKGTVVREIDALGGEMGKNIDATYIQMRMLNTGKGPAVRALRAQADKWQYHERMKDTIENEPNLTLRQAVADELIVEDGVCKGLITNTGAKYYAKSVVLTTGTAARGKIIIGELAYSSGPNNSLPSIKLPENLEKLGFKLRRFKTGTPPRVDGNTIDYSKTQEEPGDKEPRHFSYTSKDSDYLEDQMSCYMTYTNTVTHDIIRANLDRAPMFSGVIKGVGPRYCPSIEDKVVRFADKDRHQIFLEPEGRHTKEIYVGDFSTSMPEEVQLKMLHSVAGLEKAELMRPGYAIEYDVIEPWQLKHTLETKNIKHLFTAGQMNGTSGYEEAAGQGLIAGINAALSAQNKPGFTLQRDEAYIGVLIDDLVTKGTNEPYRLLTSRAEYRLLLRHDNADLRLTEKGHELGLISEDRYKEFQDKKQAISQAMEAIKKVTIHPTDEVQEYLASVKQDRLNAGVSGADFLKRPRVTFDAVERLSGETLATDRYVKEQVEIALKYEGYIKKEKTLVDRLHRLESKKIPVDIDYNAIPSLATEARQKFEKIRPESIAQAERISGVNPADLAILTAYIQQGRIAKVKNK.

Position 15–20 (15–20) interacts with FAD; that stretch reads GAGHAG. The tract at residues 205 to 231 is disordered; sequence PRVDGNTIDYSKTQEEPGDKEPRHFSY. Basic and acidic residues predominate over residues 216 to 228; the sequence is KTQEEPGDKEPRH. 276–290 provides a ligand contact to NAD(+); it reads GPRYCPSIEDKVVRF.

The protein belongs to the MnmG family. Homodimer. Heterotetramer of two MnmE and two MnmG subunits. It depends on FAD as a cofactor.

The protein resides in the cytoplasm. Its function is as follows. NAD-binding protein involved in the addition of a carboxymethylaminomethyl (cmnm) group at the wobble position (U34) of certain tRNAs, forming tRNA-cmnm(5)s(2)U34. This Lactobacillus johnsonii (strain CNCM I-12250 / La1 / NCC 533) protein is tRNA uridine 5-carboxymethylaminomethyl modification enzyme MnmG.